We begin with the raw amino-acid sequence, 87 residues long: Large ribosomal subunit protein bL27 (87 aa).

The disordered stretch occupies residues 1-21 (MAHKKAGGSSRNGRDSESKRL).

The protein belongs to the bacterial ribosomal protein bL27 family.

The protein is Large ribosomal subunit protein bL27 of Aromatoleum aromaticum (strain DSM 19018 / LMG 30748 / EbN1) (Azoarcus sp. (strain EbN1)).